The sequence spans 335 residues: Biotin synthase (335 aa).

The Radical SAM core domain maps to 51–278 (NTVQLSSLLS…LAKVRLSAGR (228 aa)). Positions 66, 70, and 73 each coordinate [4Fe-4S] cluster. Residues Cys110, Cys141, Cys201, and Arg273 each coordinate [2Fe-2S] cluster.

The protein belongs to the radical SAM superfamily. Biotin synthase family. Homodimer. Requires [4Fe-4S] cluster as cofactor. [2Fe-2S] cluster serves as cofactor.

The enzyme catalyses (4R,5S)-dethiobiotin + (sulfur carrier)-SH + 2 reduced [2Fe-2S]-[ferredoxin] + 2 S-adenosyl-L-methionine = (sulfur carrier)-H + biotin + 2 5'-deoxyadenosine + 2 L-methionine + 2 oxidized [2Fe-2S]-[ferredoxin]. The protein operates within cofactor biosynthesis; biotin biosynthesis; biotin from 7,8-diaminononanoate: step 2/2. Functionally, catalyzes the conversion of dethiobiotin (DTB) to biotin by the insertion of a sulfur atom into dethiobiotin via a radical-based mechanism. The sequence is that of Biotin synthase from Bordetella pertussis (strain Tohama I / ATCC BAA-589 / NCTC 13251).